The primary structure comprises 1221 residues: DNA-directed RNA polymerase subunit beta (1221 aa).

The tract at residues E1176–K1221 is disordered. Over residues E1183–D1215 the composition is skewed to acidic residues.

Belongs to the RNA polymerase beta chain family. In terms of assembly, the RNAP catalytic core consists of 2 alpha, 1 beta, 1 beta' and 1 omega subunit. When a sigma factor is associated with the core the holoenzyme is formed, which can initiate transcription.

It catalyses the reaction RNA(n) + a ribonucleoside 5'-triphosphate = RNA(n+1) + diphosphate. Its function is as follows. DNA-dependent RNA polymerase catalyzes the transcription of DNA into RNA using the four ribonucleoside triphosphates as substrates. The protein is DNA-directed RNA polymerase subunit beta of Lactobacillus delbrueckii subsp. bulgaricus (strain ATCC 11842 / DSM 20081 / BCRC 10696 / JCM 1002 / NBRC 13953 / NCIMB 11778 / NCTC 12712 / WDCM 00102 / Lb 14).